Consider the following 179-residue polypeptide: Large ribosomal subunit protein uL5 (179 aa).

This sequence belongs to the universal ribosomal protein uL5 family. Part of the 50S ribosomal subunit; part of the 5S rRNA/L5/L18/L25 subcomplex. Contacts the 5S rRNA and the P site tRNA. Forms a bridge to the 30S subunit in the 70S ribosome.

This is one of the proteins that bind and probably mediate the attachment of the 5S RNA into the large ribosomal subunit, where it forms part of the central protuberance. In the 70S ribosome it contacts protein S13 of the 30S subunit (bridge B1b), connecting the 2 subunits; this bridge is implicated in subunit movement. Contacts the P site tRNA; the 5S rRNA and some of its associated proteins might help stabilize positioning of ribosome-bound tRNAs. The polypeptide is Large ribosomal subunit protein uL5 (Bacillus mycoides (strain KBAB4) (Bacillus weihenstephanensis)).